The following is a 245-amino-acid chain: Orotidine 5'-phosphate decarboxylase (245 aa).

Residues aspartate 22, lysine 44, aspartate 71–threonine 80, threonine 131, arginine 192, glutamine 201, glycine 221, and arginine 222 each bind substrate. The active-site Proton donor is the lysine 73.

It belongs to the OMP decarboxylase family. Type 1 subfamily. Homodimer.

The enzyme catalyses orotidine 5'-phosphate + H(+) = UMP + CO2. It functions in the pathway pyrimidine metabolism; UMP biosynthesis via de novo pathway; UMP from orotate: step 2/2. Its function is as follows. Catalyzes the decarboxylation of orotidine 5'-monophosphate (OMP) to uridine 5'-monophosphate (UMP). This Shigella flexneri serotype 5b (strain 8401) protein is Orotidine 5'-phosphate decarboxylase.